Here is a 254-residue protein sequence, read N- to C-terminus: Probable derlin-2 homolog (254 aa).

At 1–17 (MAQPFEDWYKNLPIVTK) the chain is on the cytoplasmic side. The helical transmembrane segment at 18-38 (IYMTGCVVTSVSVYLGLVGPL) threads the bilayer. The Lumenal portion of the chain corresponds to 39 to 95 (RLYLNFPLVFGKYEFWRLFTNFFFYDEIGMNFFFHMYFLVRHSRLLEESSFRGRSAD). The chain crosses the membrane as a helical span at residues 96-116 (YLFMWIFGSFLLLIMDAFLFY). The Cytoplasmic segment spans residues 117 to 118 (TK). A helical transmembrane segment spans residues 119 to 139 (IVTKVLFLAPSIAFMVIYVWS). The Lumenal portion of the chain corresponds to 140–146 (RRNPNMH). The helical transmembrane segment at 147–167 (ISFLGLFTFSAPYLPWVILIM) threads the bilayer. At 168 to 254 (GYLFNHDLTT…FLNEDDLDQQ (87 aa)) the chain is on the cytoplasmic side.

This sequence belongs to the derlin family.

The protein localises to the endoplasmic reticulum membrane. Functionally, may be involved in the degradation process of specific misfolded endoplasmic reticulum (ER) luminal proteins. May also be involved in endoplasmic reticulum stress-induced pre-emptive quality control, a mechanism that selectively attenuates the translocation of newly synthesized proteins into the endoplasmic reticulum and reroutes them to the cytosol for proteasomal degradation. The sequence is that of Probable derlin-2 homolog (derl2) from Dictyostelium discoideum (Social amoeba).